Here is a 218-residue protein sequence, read N- to C-terminus: MKDSALTLKRVRIGKFSESMVEERPTLNLFEKVEFNPVPTALVDQLPTEPLVEATLLEKEAITFVDTYATSEAHDQIATFVLEQSMETEVVEKEAIETAIVAPAPDLVEEKAVLVEEVLVEPTATEAVTTEENQVSTTSVTKIKTKRSNTKKVTSETLVASKSVKTKKLITPNRVSSGNVNITLWQVDKKSTNLTKTKTDLFGKKHQFKGPQLISYKK.

This is an uncharacterized protein from Mycoplasma pneumoniae (strain ATCC 29342 / M129 / Subtype 1) (Mycoplasmoides pneumoniae).